The sequence spans 551 residues: Preprotein translocase subunit SCY1, chloroplastic (551 aa).

The transit peptide at 1–67 (MITVSEVSSY…WNLGLVINSR (67 aa)) directs the protein to the chloroplast. 10 helical membrane-spanning segments follow: residues 142–162 (FLKL…PLGG), 192–212 (LGIC…FQLL), 241–261 (ASVG…RPYV), 268–288 (WVVS…YIGE), 295–315 (LGNG…PASF), 328–348 (YTGL…IVYV), 382–402 (SAGV…ATLA), 415–435 (FALT…IAFF), 482–502 (VLGS…EQIT), and 503–523 (HLTA…GCAT).

It belongs to the SecY/SEC61-alpha family. In terms of assembly, part of the Sec protein translocation apparatus. Interacts with SECE1, ALB3 and probably with SECA1.

It is found in the plastid. The protein localises to the chloroplast thylakoid membrane. Its function is as follows. Involved in protein export. Probably interacts with other proteins to allow the translocation of proteins across the chloroplast thylakoid membranes. Required for normal greening during embryogenesis. Central subunit of the protein translocation channel SecYE. Consists of two halves formed by TMs 1-5 and 6-10. These two domains form a lateral gate at the front which open onto the bilayer between TMs 2 and 7, and are clamped together by SecE at the back. The channel is closed by both a pore ring composed of hydrophobic SecY resides and a short helix (helix 2A) on the extracellular side of the membrane which forms a plug. The polypeptide is Preprotein translocase subunit SCY1, chloroplastic (SCY1) (Arabidopsis thaliana (Mouse-ear cress)).